The primary structure comprises 413 residues: MEDVVVKQGFLYLQQQQTFGKKWRRFGAALYGGSGCALARLELQEGSEKSRRGEAPRRVIRLNDCLRVSEASGEASSPRDTSTFFLETTERLYLLAAPTAERGDWIQAICLLAFPGRRKELSGLEGKGGRPRMEENELYSSTTAGTPQKEFAVTVRPTEVSERCRLRGSYTLRVGESALELWGGPESGTQLYEWPYRFLRRFGRDKVTFSFEAGRRCVSGEGNFEFETRQGNEIFLALEEAISAQKNAAPPGPQTQPVPVPAVLPRPESPYARPHDSLPPPSPTVPVPTPRQQRGLEGEYAVPFDAVARSLGKSLRGVLAVPPQLPADPLYDSIEDHPPPRPDHIYDEPEGMAALALYDSPQEPRGEAWRRQATADRDSSGLKHGYIVGQDFAASGWPQGTEYDNVVLKKGPK.

Residues 4–114 enclose the PH domain; the sequence is VVVKQGFLYL…WIQAICLLAF (111 aa). One can recognise an IRS-type PTB domain in the interval 147-252; that stretch reads PQKEFAVTVR…SAQKNAAPPG (106 aa). Positions 247-292 are disordered; that stretch reads NAAPPGPQTQPVPVPAVLPRPESPYARPHDSLPPPSPTVPVPTPRQ. Pro residues predominate over residues 250–268; sequence PPGPQTQPVPVPAVLPRPE. Tyr271 is modified (phosphotyrosine). Residues 277-289 are compositionally biased toward pro residues; sequence SLPPPSPTVPVPT. A phosphotyrosine mark is found at Tyr300 and Tyr346. A compositionally biased stretch (basic and acidic residues) spans 362–381; it reads QEPRGEAWRRQATADRDSSG. Positions 362 to 383 are disordered; sequence QEPRGEAWRRQATADRDSSGLK.

This sequence belongs to the DOK family. Type A subfamily. As to quaternary structure, interacts with phosphorylated RASGAP and EGFR. Interacts with RET and NCK. Interacts (via PH domain) with TEK/TIE2 (tyrosine phosphorylated). In terms of processing, on immunoreceptor stimulation, phosphorylated on C-terminal tyrosine residues. Phosphorylation on Tyr-346 is required for binding to the SH2 domain of NCK. Phosphorylation on both Tyr-271 and Tyr-300 is required for interaction with RASGAP. Phosphorylated on tyrosine residues by TEK/TIE2.

Functionally, DOK proteins are enzymatically inert adaptor or scaffolding proteins. They provide a docking platform for the assembly of multimolecular signaling complexes. DOK2 may modulate the cellular proliferation induced by IL-4, as well as IL-2 and IL-3. May be involved in modulating Bcr-Abl signaling. Attenuates EGF-stimulated MAP kinase activation. In Bos taurus (Bovine), this protein is Docking protein 2 (DOK2).